A 452-amino-acid chain; its full sequence is Isocitrate dehydrogenase [NADP], mitochondrial (452 aa).

The N-terminal 39 residues, 1 to 39 (MAGYLRVVRSLCRASGSRPAWAPAALTAPTSQEQTRRHY), are a transit peptide targeting the mitochondrion. 4 positions are modified to N6-acetyllysine: K45, K48, K67, and K69. Residues K80 and K106 each carry the N6-acetyllysine; alternate modification. N6-succinyllysine; alternate occurs at positions 80 and 106. NADP(+) is bound by residues 115–117 (TIT) and R122. A substrate-binding site is contributed by T117. Substrate contacts are provided by residues 134–140 (SPNGTIR) and R149. An N6-acetyllysine modification is found at K155. Position 166 is an N6-acetyllysine; alternate (K166). N6-succinyllysine; alternate is present on K166. Position 172 (R172) interacts with substrate. 2 positions are modified to N6-acetyllysine; alternate: K180 and K193. K180 and K193 each carry N6-succinyllysine; alternate. K199 is modified (N6-acetyllysine). Position 256 is an N6-acetyllysine; alternate (K256). An N6-succinyllysine; alternate modification is found at K256. K263, K272, K275, and K280 each carry N6-acetyllysine. K282 carries the N6-acetyllysine; alternate modification. K282 carries the post-translational modification N6-succinyllysine; alternate. Position 291 (D291) interacts with Mn(2+). K299 provides a ligand contact to NADP(+). Residue D314 participates in Mn(2+) binding. NADP(+) contacts are provided by residues 349–354 (GTVTRH) and N367. K384 carries the N6-acetyllysine; alternate modification. The residue at position 384 (K384) is an N6-succinyllysine; alternate. N6-acetyllysine is present on residues K400, K413, and K442.

Belongs to the isocitrate and isopropylmalate dehydrogenases family. Homodimer. Mg(2+) is required as a cofactor. Mn(2+) serves as cofactor. Acetylation at Lys-413 dramatically reduces catalytic activity. Deacetylated by SIRT3.

It is found in the mitochondrion. It carries out the reaction D-threo-isocitrate + NADP(+) = 2-oxoglutarate + CO2 + NADPH. Functionally, plays a role in intermediary metabolism and energy production. It may tightly associate or interact with the pyruvate dehydrogenase complex. This is Isocitrate dehydrogenase [NADP], mitochondrial (IDH2) from Macaca fascicularis (Crab-eating macaque).